Reading from the N-terminus, the 161-residue chain is Endoribonuclease YbeY (161 aa).

His-121, His-125, and His-131 together coordinate Zn(2+).

Belongs to the endoribonuclease YbeY family. Zn(2+) serves as cofactor.

Its subcellular location is the cytoplasm. Its function is as follows. Single strand-specific metallo-endoribonuclease involved in late-stage 70S ribosome quality control and in maturation of the 3' terminus of the 16S rRNA. The chain is Endoribonuclease YbeY from Xylella fastidiosa (strain 9a5c).